Reading from the N-terminus, the 451-residue chain is Serine--tRNA ligase, cytoplasmic (451 aa).

236–238 (TSE) is a binding site for L-serine. ATP-binding positions include 267–269 (RKE) and Val283. Position 290 (Glu290) interacts with L-serine. 354–357 (ELVS) lines the ATP pocket. Thr392 serves as a coordination point for L-serine.

This sequence belongs to the class-II aminoacyl-tRNA synthetase family. Type-1 seryl-tRNA synthetase subfamily. Homodimer. The tRNA molecule binds across the dimer.

The protein resides in the cytoplasm. The catalysed reaction is tRNA(Ser) + L-serine + ATP = L-seryl-tRNA(Ser) + AMP + diphosphate + H(+). It catalyses the reaction tRNA(Sec) + L-serine + ATP = L-seryl-tRNA(Sec) + AMP + diphosphate + H(+). It functions in the pathway aminoacyl-tRNA biosynthesis; selenocysteinyl-tRNA(Sec) biosynthesis; L-seryl-tRNA(Sec) from L-serine and tRNA(Sec): step 1/1. Its function is as follows. Catalyzes the attachment of serine to tRNA(Ser). Is also able to aminoacylate tRNA(Sec) with serine, to form the misacylated tRNA L-seryl-tRNA(Sec), which will be further converted into selenocysteinyl-tRNA(Sec). This Dictyostelium discoideum (Social amoeba) protein is Serine--tRNA ligase, cytoplasmic (serS).